Here is a 305-residue protein sequence, read N- to C-terminus: Glycine--tRNA ligase alpha subunit (305 aa).

It belongs to the class-II aminoacyl-tRNA synthetase family. As to quaternary structure, tetramer of two alpha and two beta subunits.

It is found in the cytoplasm. It carries out the reaction tRNA(Gly) + glycine + ATP = glycyl-tRNA(Gly) + AMP + diphosphate. This chain is Glycine--tRNA ligase alpha subunit, found in Janthinobacterium sp. (strain Marseille) (Minibacterium massiliensis).